The chain runs to 134 residues: Arsenate reductase (134 aa).

Residues C11, C83, and C90 each act as nucleophile in the active site. 2 disulfides stabilise this stretch: C11/C83 and C83/C90.

This sequence belongs to the low molecular weight phosphotyrosine protein phosphatase family. Thioredoxin-coupled ArsC subfamily.

The protein localises to the cytoplasm. The enzyme catalyses arsenate + [thioredoxin]-dithiol + H(+) = arsenite + [thioredoxin]-disulfide + H2O. Its function is as follows. Catalyzes the reduction of arsenate [As(V)] to arsenite [As(III)]. This Bacillus cereus (strain AH187) protein is Arsenate reductase.